A 353-amino-acid chain; its full sequence is Protein MGF 360-13L (353 aa).

This sequence belongs to the asfivirus MGF 360 family.

In terms of biological role, plays a role in virus cell tropism, and may be required for efficient virus replication in macrophages. The sequence is that of Protein MGF 360-13L from African swine fever virus (isolate Tick/Malawi/Lil 20-1/1983) (ASFV).